The following is a 738-amino-acid chain: Ent-kaurene synthase-like 1 (738 aa).

Positions 487, 491, 631, 632, and 639 each coordinate Mg(2+). A DDXXD motif motif is present at residues 487–491 (DDFFD).

Belongs to the terpene synthase family. Mg(2+) serves as cofactor.

It catalyses the reaction ent-copalyl diphosphate = ent-kaur-16-ene + diphosphate. Its pathway is secondary metabolite biosynthesis; terpenoid biosynthesis. In terms of biological role, diterpene cyclase involved in the biosynthesis of labdane-related diterpenoids (LRDs) natural products. Catalyzes the cyclization of ent-CDP into ent-kaurene. This is Ent-kaurene synthase-like 1 from Ricinus communis (Castor bean).